Reading from the N-terminus, the 382-residue chain is Beta-1,4-galactosyltransferase 6 (382 aa).

Residues 1–15 are Cytoplasmic-facing; the sequence is MSALKRMMRVSNRSL. The chain crosses the membrane as a helical; Signal-anchor for type II membrane protein span at residues 16 to 35; sequence IAFIFFFSLSTSCLYFIYVA. The Lumenal portion of the chain corresponds to 36-382; the sequence is PGIANTYLFM…MPELAPVEDY (347 aa). Residues Asn-71, Asn-75, Asn-83, Asn-84, Asn-99, and Asn-122 are each glycosylated (N-linked (GlcNAc...) asparagine). A disulfide bridge connects residues Cys-108 and Cys-152. UDP-alpha-D-galactose-binding positions include 163–167, 202–204, 229–230, Tyr-258, and Trp-290; these read PFRNR, FNR, and VD. Cys-223 and Cys-242 form a disulfide bridge. Asp-230 serves as a coordination point for Mn(2+). 292–295 contributes to the N-acetyl-D-glucosamine binding site; sequence GEDD. The N-linked (GlcNAc...) asparagine glycan is linked to Asn-307. His-323 is a binding site for Mn(2+). 323-324 lines the UDP-alpha-D-galactose pocket; it reads HH. Arg-334 serves as a coordination point for N-acetyl-D-glucosamine. The N-linked (GlcNAc...) asparagine glycan is linked to Asn-367.

Belongs to the glycosyltransferase 7 family. Mn(2+) is required as a cofactor. Mg(2+) serves as cofactor. Requires Ca(2+) as cofactor. In terms of tissue distribution, highest expression in brain with lower levels found in lungs, heart, skeletal muscle and kidney. Lowest expression in testis, liver and spleen.

Its subcellular location is the golgi apparatus. It localises to the golgi stack membrane. It carries out the reaction a beta-D-glucosyl-(1&lt;-&gt;1')-N-acylsphing-4-enine + UDP-alpha-D-galactose = a beta-D-Gal-(1-&gt;4)-beta-D-Glc-(1&lt;-&gt;1)-Cer(d18:1(4E)) + UDP + H(+). It functions in the pathway protein modification; protein glycosylation. The protein operates within sphingolipid metabolism. With respect to regulation, inhibited by EDTA. Catalyzes the synthesis of lactosylceramide (LacCer) via the transfer of galactose from UDP-galactose to glucosylceramide (GlcCer). LacCer is the starting point in the biosynthesis of all gangliosides (membrane-bound glycosphingolipids) which play pivotal roles in the CNS including neuronal maturation and axonal and myelin formation. This Rattus norvegicus (Rat) protein is Beta-1,4-galactosyltransferase 6.